The sequence spans 314 residues: Malate dehydrogenase (314 aa).

NAD(+) is bound by residues Gly-11 to Gly-16 and Asp-35. Residues Arg-84 and Arg-90 each contribute to the substrate site. NAD(+) contacts are provided by residues Asn-97 and Ile-120 to Asn-122. Residues Asn-122 and Arg-153 each coordinate substrate. Residue His-177 is the Proton acceptor of the active site.

The protein belongs to the LDH/MDH superfamily. MDH type 3 family.

It carries out the reaction (S)-malate + NAD(+) = oxaloacetate + NADH + H(+). In terms of biological role, catalyzes the reversible oxidation of malate to oxaloacetate. This is Malate dehydrogenase from Rickettsia prowazekii (strain Madrid E).